The sequence spans 353 residues: Photosystem II protein D1 (353 aa).

T2 is subject to N-acetylthreonine. Residue T2 is modified to Phosphothreonine. 3 helical membrane passes run 29-46, 118-133, and 142-156; these read YIGWFGVLMIPTLLTATS, HFLLGVACYMGREWEL, and WIAVAYSAPVAAATA. H118 contributes to the chlorophyll a binding site. Position 126 (Y126) interacts with pheophytin a. [CaMn4O5] cluster is bound by residues D170 and E189. Residues 197 to 218 form a helical membrane-spanning segment; it reads FHMLGVAGVFGGSLFSAMHGSL. Residue H198 participates in chlorophyll a binding. A quinone is bound by residues H215 and 264–265; that span reads SF. Position 215 (H215) interacts with Fe cation. Residue H272 participates in Fe cation binding. Residues 274-288 form a helical membrane-spanning segment; the sequence is FLAAWPVVGIWFTAL. Residues H332, E333, D342, and A344 each coordinate [CaMn4O5] cluster. Positions 345-353 are excised as a propeptide; the sequence is AVEVPSING.

Belongs to the reaction center PufL/M/PsbA/D family. In terms of assembly, PSII is composed of 1 copy each of membrane proteins PsbA, PsbB, PsbC, PsbD, PsbE, PsbF, PsbH, PsbI, PsbJ, PsbK, PsbL, PsbM, PsbT, PsbX, PsbY, PsbZ, Psb30/Ycf12, at least 3 peripheral proteins of the oxygen-evolving complex and a large number of cofactors. It forms dimeric complexes. Requires The D1/D2 heterodimer binds P680, chlorophylls that are the primary electron donor of PSII, and subsequent electron acceptors. It shares a non-heme iron and each subunit binds pheophytin, quinone, additional chlorophylls, carotenoids and lipids. D1 provides most of the ligands for the Mn4-Ca-O5 cluster of the oxygen-evolving complex (OEC). There is also a Cl(-1) ion associated with D1 and D2, which is required for oxygen evolution. The PSII complex binds additional chlorophylls, carotenoids and specific lipids. as cofactor. In terms of processing, tyr-161 forms a radical intermediate that is referred to as redox-active TyrZ, YZ or Y-Z. C-terminally processed by CTPA; processing is essential to allow assembly of the oxygen-evolving complex and thus photosynthetic growth.

The protein localises to the plastid. It localises to the chloroplast thylakoid membrane. It catalyses the reaction 2 a plastoquinone + 4 hnu + 2 H2O = 2 a plastoquinol + O2. Functionally, photosystem II (PSII) is a light-driven water:plastoquinone oxidoreductase that uses light energy to abstract electrons from H(2)O, generating O(2) and a proton gradient subsequently used for ATP formation. It consists of a core antenna complex that captures photons, and an electron transfer chain that converts photonic excitation into a charge separation. The D1/D2 (PsbA/PsbD) reaction center heterodimer binds P680, the primary electron donor of PSII as well as several subsequent electron acceptors. This chain is Photosystem II protein D1, found in Cucumis sativus (Cucumber).